An 815-amino-acid chain; its full sequence is Serotype-specific mannosyltransferase WbdA (815 aa).

The interval 1–374 (MSRAIIENAG…WANTAHLAIE (374 aa)) is alpha-(1-&gt;2)-mannosyltransferase. The alpha-(1-&gt;3)-mannosyltransferase stretch occupies residues 431 to 804 (KLLVDISVLA…WKQSAEFLLK (374 aa)).

Belongs to the glycosyltransferase group 1 family. Glycosyltransferase 4 subfamily. In terms of assembly, monomer. Interacts with the C-terminal region of WbdD.

It is found in the cell inner membrane. It carries out the reaction [alpha-D-Man-(1-&gt;3)-alpha-D-Man-(1-&gt;3)-alpha-D-Man-(1-&gt;2)-alpha-D-Man-(1-&gt;2)](n)-alpha-D-Man-(1-&gt;3)-alpha-D-Man-(1-&gt;3)-alpha-D-Man-(1-&gt;3)-alpha-D-GlcNAc-di-trans,octa-cis-undecaprenyl diphosphate + 2 GDP-alpha-D-mannose = alpha-D-Man-(1-&gt;2)-alpha-D-Man-(1-&gt;2)-[alpha-D-Man-(1-&gt;3)-alpha-D-Man-(1-&gt;3)-alpha-D-Man-(1-&gt;2)-alpha-D-Man-(1-&gt;2)](n)-alpha-D-Man-(1-&gt;3)-alpha-D-Man-(1-&gt;3)-alpha-D-Man-(1-&gt;3)-alpha-D-GlcNAc-di-trans,octa-cis-undecaprenyl diphosphate + 2 GDP + 2 H(+). The enzyme catalyses alpha-D-Man-(1-&gt;2)-alpha-D-Man-(1-&gt;2)-[alpha-D-Man-(1-&gt;3)-alpha-D-Man-(1-&gt;3)-alpha-D-Man-(1-&gt;2)-alpha-D-Man-(1-&gt;2)](n)-alpha-D-Man-(1-&gt;3)-alpha-D-Man-(1-&gt;3)-alpha-D-Man-(1-&gt;3)-alpha-D-GlcNAc-di-trans,octa-cis-undecaprenyl diphosphate + 2 GDP-alpha-D-mannose = [alpha-D-Man-(1-&gt;3)-alpha-D-Man-(1-&gt;3)-alpha-D-Man-(1-&gt;2)-alpha-D-Man-(1-&gt;2)](n+1)-alpha-D-Man-(1-&gt;3)-alpha-D-Man-(1-&gt;3)-alpha-D-Man-(1-&gt;3)-alpha-D-GlcNAc-di-trans,octa-cis-undecaprenyl diphosphate + 2 GDP + 2 H(+). It participates in bacterial outer membrane biogenesis; LPS O-antigen biosynthesis. Mannosyltransferase involved in the biosynthesis of the repeat unit of the lipopolysaccharide (LPS) O-antigen region. Catalyzes the polymerization of a tetrasaccharide repeat unit containing two alpha-(1-&gt;3)- and two alpha-(1-&gt;2)-linked mannopyranose residues. The polypeptide is Serotype-specific mannosyltransferase WbdA (Escherichia coli).